Consider the following 450-residue polypeptide: tRNA modification GTPase MnmE (450 aa).

Residues Arg-20, Glu-78, and Lys-117 each contribute to the (6S)-5-formyl-5,6,7,8-tetrahydrofolate site. In terms of domain architecture, TrmE-type G spans 211-372; that stretch reads GLRMVIVGKP…LEESIYRETQ (162 aa). Asn-221 lines the K(+) pocket. GTP is bound by residues 221–226, 240–246, 265–268, 326–329, and 353–355; these read NVGKST, TDIPGTT, DTAG, NKVD, and SAL. Ser-225 provides a ligand contact to Mg(2+). 3 residues coordinate K(+): Thr-240, Ile-242, and Thr-245. Thr-246 contributes to the Mg(2+) binding site. Lys-450 serves as a coordination point for (6S)-5-formyl-5,6,7,8-tetrahydrofolate.

Belongs to the TRAFAC class TrmE-Era-EngA-EngB-Septin-like GTPase superfamily. TrmE GTPase family. Homodimer. Heterotetramer of two MnmE and two MnmG subunits. The cofactor is K(+).

It is found in the cytoplasm. Functionally, exhibits a very high intrinsic GTPase hydrolysis rate. Involved in the addition of a carboxymethylaminomethyl (cmnm) group at the wobble position (U34) of certain tRNAs, forming tRNA-cmnm(5)s(2)U34. The polypeptide is tRNA modification GTPase MnmE (Thermotoga maritima (strain ATCC 43589 / DSM 3109 / JCM 10099 / NBRC 100826 / MSB8)).